A 34-amino-acid chain; its full sequence is Tryptophanase operon leader peptide (34 aa).

The protein is Tryptophanase operon leader peptide (tnaL) of Proteus vulgaris.